Consider the following 367-residue polypeptide: GTPase Obg (367 aa).

The Obg domain occupies 1–158 (MFIDNVELTV…VQIRLELKLI (158 aa)). In terms of domain architecture, OBG-type G spans 159–358 (ADVGLVGFPN…LKYALYDLVK (200 aa)). GTP is bound by residues 165–172 (GFPNVGKS), 190–194 (FTTLT), 212–215 (DIPG), 280–283 (TKID), and 339–341 (SAV). Mg(2+) contacts are provided by serine 172 and threonine 192.

Belongs to the TRAFAC class OBG-HflX-like GTPase superfamily. OBG GTPase family. In terms of assembly, monomer. It depends on Mg(2+) as a cofactor.

The protein localises to the cytoplasm. In terms of biological role, an essential GTPase which binds GTP, GDP and possibly (p)ppGpp with moderate affinity, with high nucleotide exchange rates and a fairly low GTP hydrolysis rate. Plays a role in control of the cell cycle, stress response, ribosome biogenesis and in those bacteria that undergo differentiation, in morphogenesis control. This chain is GTPase Obg, found in Nitratiruptor sp. (strain SB155-2).